The sequence spans 209 residues: Probable transcriptional regulator ycf29 (209 aa).

Positions 4–120 constitute a Response regulatory domain; the sequence is NLMLVENDTV…ELVSLIKNLI (117 aa). D53 is modified (4-aspartylphosphate). The HTH luxR-type domain occupies 139–204; it reads PLFQLLYLTP…LLVKYSIKNN (66 aa).

It localises to the plastid. Its subcellular location is the chloroplast. The polypeptide is Probable transcriptional regulator ycf29 (ycf29) (Porphyra purpurea (Red seaweed)).